Here is a 513-residue protein sequence, read N- to C-terminus: Microcin J25-processing protein McjC (513 aa).

The 261-residue stretch at 176–436 (STIDSIIDNI…FGSDIFWKKT (261 aa)) folds into the Asparagine synthetase domain.

The protein localises to the cytoplasm. In terms of biological role, along with McjB, necessary and sufficient to process the inactive microcin J25 (McjA) precursor into the active peptide. May be involved in the formation of the amide bond between Gly-38 and Glu-53 of McjA. This is Microcin J25-processing protein McjC (mcjC) from Escherichia coli.